A 236-amino-acid polypeptide reads, in one-letter code: 2-C-methyl-D-erythritol 4-phosphate cytidylyltransferase (236 aa).

Belongs to the IspD/TarI cytidylyltransferase family. IspD subfamily. As to quaternary structure, homodimer.

It catalyses the reaction 2-C-methyl-D-erythritol 4-phosphate + CTP + H(+) = 4-CDP-2-C-methyl-D-erythritol + diphosphate. It participates in isoprenoid biosynthesis; isopentenyl diphosphate biosynthesis via DXP pathway; isopentenyl diphosphate from 1-deoxy-D-xylulose 5-phosphate: step 2/6. Catalyzes the formation of 4-diphosphocytidyl-2-C-methyl-D-erythritol from CTP and 2-C-methyl-D-erythritol 4-phosphate (MEP). The sequence is that of 2-C-methyl-D-erythritol 4-phosphate cytidylyltransferase from Shigella flexneri serotype 5b (strain 8401).